A 400-amino-acid chain; its full sequence is MSKKSLASLSSADISGKRALVRVDFNVPVDDQGKITDDTRIRAALPTIQDLTQKGAKVILASHFGRPKGVDDKLRLTPVAKRLSELLGQEVIKTDDSIGDEVAAKVAALQNGQVLLLENVRFYPEEEKNDAEFAKKLAANADFYVNDAFGTAHRAHASTEGVTKFLSPSVAGYLVEKELQYLQNAIENPQRPLAAIIGGSKVSSKIGVIETLLEKCDKLIIGGGMIFTFYKARGLSVGKSLVEEDKLELAKSLEAKAKERGVALLLPTDVVLADNFAPDANSQTVSIENIPDGWMGLDIGPDSVKFFQEALADTKTVIWNGPMGVFEFDKFAAGTEAIAHTLAEIGKTGTTTIIGGGDSVAAVEKVGLADQMSHISTGGGASLELLEGKVLPGIAALDDA.

Residues 24–26, Arg-40, 63–66, Arg-121, and Arg-154 each bind substrate; these read DFN and HFGR. Residues Lys-205, Gly-296, Glu-327, and 356-359 each bind ATP; that span reads GGDS.

The protein belongs to the phosphoglycerate kinase family. As to quaternary structure, monomer.

It is found in the cytoplasm. It catalyses the reaction (2R)-3-phosphoglycerate + ATP = (2R)-3-phospho-glyceroyl phosphate + ADP. The protein operates within carbohydrate degradation; glycolysis; pyruvate from D-glyceraldehyde 3-phosphate: step 2/5. In Nostoc punctiforme (strain ATCC 29133 / PCC 73102), this protein is Phosphoglycerate kinase.